A 1612-amino-acid polypeptide reads, in one-letter code: Phospholipid-transporting ATPase DNF2 (1612 aa).

Residues 1–74 (MSSPSKPTSP…MKDISTPDLS (74 aa)) form a disordered region. The Cytoplasmic segment spans residues 1–252 (MSSPSKPTSP…TFFPKNILFQ (252 aa)). Residues 20–30 (GSASNGLSSMS) are compositionally biased toward low complexity. Threonine 70 is subject to Phosphothreonine. Phosphoserine is present on serine 85. The chain crosses the membrane as a helical span at residues 253 to 273 (FHNFANIYFLILLILGAFQIF). Positions 272–279 (IFGVTNPG) are involved in phosphatidylcholine substrate selection. At 274–277 (GVTN) the chain is on the extracellular side. Residues 278-298 (PGFASVPLIVIVIITAIKDGI) form a helical membrane-spanning segment. Topologically, residues 299-598 (EDSRRTVLDL…RISRELNFSV (300 aa)) are cytoplasmic. The segment covering 364–373 (KLQKKREELR) has biased composition (basic and acidic residues). Residues 364–384 (KLQKKREELRRKRNSRSFGPR) are disordered. Residues serine 389, serine 392, serine 396, and serine 403 each carry the phosphoserine modification. Tyrosine 406 is subject to Phosphotyrosine. The chain crosses the membrane as a helical span at residues 599–619 (ILNFVLLFILCFTAGIVNGVY). The Extracellular portion of the chain corresponds to 620-639 (YKQKPRSRDYFEFGTIGGSA). The segment at 631–635 (EFGTI) is involved in phosphatidylcholine substrate selection. The chain crosses the membrane as a helical span at residues 640–660 (STNGFVSFWVAVILYQSLVPI). The Cytoplasmic segment spans residues 661–1231 (SLYISVEIIK…WCYKRLAEMI (571 aa)). Aspartate 712 acts as the 4-aspartylphosphate intermediate in catalysis. Aspartate 712, lysine 713, and threonine 714 together coordinate ATP. Mg(2+) is bound at residue aspartate 712. Threonine 714 is a Mg(2+) binding site. Threonine 782 is subject to Phosphothreonine. Positions 846, 887, 889, 892, and 916 each coordinate ATP. Lysine 938 is covalently cross-linked (Glycyl lysine isopeptide (Lys-Gly) (interchain with G-Cter in ubiquitin)). ATP is bound by residues arginine 952, threonine 953, threonine 1032, glycine 1033, aspartate 1034, arginine 1147, and lysine 1153. Aspartate 1173 lines the Mg(2+) pocket. Asparagine 1176 and aspartate 1177 together coordinate ATP. Aspartate 1177 is a binding site for Mg(2+). The chain crosses the membrane as a helical span at residues 1232–1252 (PQFFYKNVIFTLSLFWYGIYN). Topologically, residues 1253 to 1262 (NFDGSYLFEY) are extracellular. Residues 1263-1283 (TYLTFYNLAFTSVPVILLAVL) form a helical membrane-spanning segment. The Cytoplasmic portion of the chain corresponds to 1284 to 1313 (DQDVSDTVSMLVPQLYRVGILRKEWNQTKF). The chain crosses the membrane as a helical span at residues 1314-1334 (LWYMLDGVYQSVICFFFPYLA). Residues 1335 to 1350 (YHKNMVVTENGLGLDH) lie on the Extracellular side of the membrane. A helical membrane pass occupies residues 1351-1371 (RYFVGVFVTAIAVTSCNFYVF). Residues 1372-1377 (MEQYRW) are Cytoplasmic-facing. The chain crosses the membrane as a helical span at residues 1378–1398 (DWFCGLFICLSLAVFYGWTGI). The Extracellular portion of the chain corresponds to 1399-1418 (WTSSSSSNEFYKGAARVFAQ). A helical membrane pass occupies residues 1419–1439 (PAYWAVLFVGVLFCLLPRFTI). Residue arginine 1436 coordinates a 1,2-diacyl-sn-glycero-3-phospho-L-serine. Residues 1440 to 1612 (DCIRKIFYPK…TLLSQRSRDR (173 aa)) are Cytoplasmic-facing. Serine 1542 carries the post-translational modification Phosphoserine. The interval 1544–1563 (VTTTNNLPRRSMASARGNKL) is disordered. Serine 1592 is subject to Phosphoserine.

This sequence belongs to the cation transport ATPase (P-type) (TC 3.A.3) family. Type IV subfamily. As to quaternary structure, component of a flippase complex consisting of DNF1 and LEM3. Interacts with LEM3; the interaction is direct. Mg(2+) is required as a cofactor. Post-translationally, phosphorylated by FPK1 and KIN82.

It localises to the cell membrane. The enzyme catalyses ATP + H2O + phospholipidSide 1 = ADP + phosphate + phospholipidSide 2.. It catalyses the reaction a 1,2-diacyl-sn-glycero-3-phosphoethanolamine(out) + ATP + H2O = a 1,2-diacyl-sn-glycero-3-phosphoethanolamine(in) + ADP + phosphate + H(+). The catalysed reaction is a 1,2-diacyl-sn-glycero-3-phosphocholine(out) + ATP + H2O = a 1,2-diacyl-sn-glycero-3-phosphocholine(in) + ADP + phosphate + H(+). It carries out the reaction a beta-D-glucosyl-(1&lt;-&gt;1')-N-acylsphing-4-enine(out) + ATP + H2O = a beta-D-glucosyl-(1&lt;-&gt;1')-N-acylsphing-4-enine(in) + ADP + phosphate + H(+). The enzyme catalyses a 1,2-diacyl-sn-glycero-3-phospho-L-serine(out) + ATP + H2O = a 1,2-diacyl-sn-glycero-3-phospho-L-serine(in) + ADP + phosphate + H(+). Phosphatidylcholine flippase activity is inhibited by glucosylsphingosine, lactosylsphingosine, lysophosphatidylcholine and to a lesser degree sphingosine-1-phosphate and lysosphingomyelin. Glucosylceramide flippase activity is inhibited by lysophosphatidylcholine, glucosylsphingosine and to a lesser degree lactosylsphingosine whereas lysosphingomyelin has a stimulatory effect at low concentrations. Its function is as follows. Catalytic component of a P4-ATPase flippase complex which catalyzes the hydrolysis of ATP coupled to the transport of glucosylceramide, phosphatidylcholine, phosphatidylethanolamine, and small amounts of phosphatidylserine from the lumenal to the cytosolic leaflet of the cell membrane and ensures the maintenance of asymmetric distribution of phospholipids. Does not appear to transport sphingomyelin, inositol phosphoceramide or phosphatidic acid. Required for efficient endocytosis. Required for protein transport from Golgi to vacuoles. This Saccharomyces cerevisiae (strain ATCC 204508 / S288c) (Baker's yeast) protein is Phospholipid-transporting ATPase DNF2 (DNF2).